The sequence spans 1795 residues: Type III effector AvrE (1795 aa).

Polar residues predominate over residues 1–18; that stretch reads MQSPSIHRNTGSIIQPTV. The segment at 1 to 227 is disordered; that stretch reads MQSPSIHRNT…PPREPMLWRS (227 aa). Residues 60–75 show a composition bias toward low complexity; it reads KSKAPQQKAATPPTAK. 2 stretches are compositionally biased toward polar residues: residues 97–109 and 117–127; these read GFSN…THSA and HPNQASSSGAQ. Over residues 129-154 the composition is skewed to basic and acidic residues; that stretch reads HEIHPEAAPRKNLRVRFDLPQDRLER. The segment covering 174-191 has biased composition (polar residues); sequence ATRQFRSPDSHLQGSDGT. The segment covering 203–215 has biased composition (low complexity); the sequence is PSSSGSKIGDSDG. 2 short sequence motifs (wxxxE) span residues 393–397 and 829–833; these read WKIPE and WQRFE. The interval 1461–1488 is disordered; it reads QIGGSHTAPTGTPASAPGPTPASQTAAN. The segment covering 1467 to 1487 has biased composition (low complexity); sequence TAPTGTPASAPGPTPASQTAA. The ERMRS motif lies at 1787–1790; it reads KKEG.

Belongs to the AvrE family. In terms of assembly, in planta interaction assays, interacts with the A.thaliana protein phosphatase 2A (PP2A) via direct interaction/association with specific B' regulatory subunits.

It is found in the secreted. Its subcellular location is the host cell. The protein resides in the host cell membrane. With respect to regulation, polyamidoamine dendrimers inhibit channel and virulence activities. Its function is as follows. Major virulence factor that may function as a water- and solute-permeable channel dedicated to creating osmotic/water potential perturbation and a water- and nutrient-rich apoplast in which bacteria multiply within the infected plant tissues. Expression in Xenopus oocytes results in inward and outward currents, permeability to water and osmolarity-dependent oocyte swelling and bursting. In terms of biological role, elicits cell death in host tomato leaves and in non-host Nicotiana tabacum leaves. Acts within plant cells and promotes lesion formation. The combined action of AvrE and HopM1 is particularly important in promoting bacterial growth in plants. Contributes to the down-regulation of a specific subset of A.thaliana genes during infection, including NHL13, which is required for antibacterial immunity. The chain is Type III effector AvrE from Pseudomonas syringae pv. tomato (strain ATCC BAA-871 / DC3000).